We begin with the raw amino-acid sequence, 208 residues long: MPSVFVQGRPTASYPPFAPEAGRGAVRRVTEVGEEVLHRPCRDVTEFGPDLAALIDDMFRTMYVAEGAGLAANQVGVDLRLFVYDCPDDEGVRHVGHLVNPVLDALDPAARRLLDEGEGCLSVPGAVMAVPRPDRAVVRGLDKDGVPLLVEGTGYFARCLAHETDHVNGHVYLDRLSGRERKAALRQSADRREEVFARRAANAAAFAA.

Residues Cys120 and His162 each contribute to the Fe cation site. Glu163 is a catalytic residue. His166 is a binding site for Fe cation.

The protein belongs to the polypeptide deformylase family. The cofactor is Fe(2+).

It catalyses the reaction N-terminal N-formyl-L-methionyl-[peptide] + H2O = N-terminal L-methionyl-[peptide] + formate. Functionally, removes the formyl group from the N-terminal Met of newly synthesized proteins. Requires at least a dipeptide for an efficient rate of reaction. N-terminal L-methionine is a prerequisite for activity but the enzyme has broad specificity at other positions. In Streptomyces coelicolor (strain ATCC BAA-471 / A3(2) / M145), this protein is Peptide deformylase 3.